We begin with the raw amino-acid sequence, 106 residues long: Flagellar transcriptional regulator FlhD (106 aa).

The protein belongs to the FlhD family. As to quaternary structure, homodimer; disulfide-linked. Forms a heterohexamer composed of two FlhC and four FlhD subunits. Each FlhC binds a FlhD dimer, forming a heterotrimer, and a hexamer assembles by dimerization of two heterotrimers.

The protein localises to the cytoplasm. Functions in complex with FlhC as a master transcriptional regulator that regulates transcription of several flagellar and non-flagellar operons by binding to their promoter region. Activates expression of class 2 flagellar genes, including fliA, which is a flagellum-specific sigma factor that turns on the class 3 genes. Also regulates genes whose products function in a variety of physiological pathways. This is Flagellar transcriptional regulator FlhD from Burkholderia mallei (strain SAVP1).